The chain runs to 530 residues: Type II methyltransferase M.MjaII (530 aa).

The protein belongs to the N(4)/N(6)-methyltransferase family. N(4) subfamily.

The catalysed reaction is a 2'-deoxycytidine in DNA + S-adenosyl-L-methionine = an N(4)-methyl-2'-deoxycytidine in DNA + S-adenosyl-L-homocysteine + H(+). In terms of biological role, an alpha subtype methylase that recognizes the double-stranded sequence 5'-GGNCC-3', methylates C-5 on both strands, and protects the DNA from cleavage by the MjaII endonuclease. The chain is Type II methyltransferase M.MjaII (mjaIIM) from Methanocaldococcus jannaschii (strain ATCC 43067 / DSM 2661 / JAL-1 / JCM 10045 / NBRC 100440) (Methanococcus jannaschii).